The sequence spans 375 residues: Geranylgeranyl transferase type-1 subunit beta (375 aa).

The tract at residues 1 to 33 (MSETAVSIDSDRSKSEEEDEEEYSPPVQSSPSA) is disordered. Ser-2 carries the N-acetylserine modification. 4 PFTB repeats span residues 157 to 199 (SKSL…YMLD), 206 to 247 (KESA…RLMG), 265 to 306 (PSLL…KLIG), and 313 to 354 (KMAL…SLLE). Geranylgeranyl diphosphate is bound by residues 232–234 (HGG) and 285–288 (RTNK). The Zn(2+) site is built by Asp-291 and Cys-293. 294–297 (YAFW) contacts geranylgeranyl diphosphate. Residue His-342 participates in Zn(2+) binding.

The protein belongs to the protein prenyltransferase subunit beta family. Heterodimer of an alpha and a beta subunit. It depends on Zn(2+) as a cofactor. Mg(2+) is required as a cofactor. In terms of tissue distribution, expressed in roots, leaves, stems, flowers and siliques.

It catalyses the reaction geranylgeranyl diphosphate + L-cysteinyl-[protein] = S-geranylgeranyl-L-cysteinyl-[protein] + diphosphate. Its function is as follows. Catalyzes the transfer of a geranyl-geranyl moiety from geranyl-geranyl pyrophosphate to a cysteine at the fourth position from the C-terminus of proteins having the C-terminal sequence Cys-aliphatic-aliphatic-X (CaaX). Seems to exclusively prenylate CaaX substrates with leucine in the terminal position. The beta subunit is responsible for peptide-binding. May negatively regulate abscisic acid (ABA) signaling in guard cells and auxin-induced lateral root initiation. Negatively regulates ABA signaling in guard cells. in negative regulation of auxin-induced lateral root initiation. The sequence is that of Geranylgeranyl transferase type-1 subunit beta (GGB) from Arabidopsis thaliana (Mouse-ear cress).